A 273-amino-acid chain; its full sequence is 2,3,4,5-tetrahydropyridine-2,6-dicarboxylate N-succinyltransferase (273 aa).

Substrate is bound by residues arginine 104 and aspartate 141.

This sequence belongs to the transferase hexapeptide repeat family. Homotrimer.

It is found in the cytoplasm. The enzyme catalyses (S)-2,3,4,5-tetrahydrodipicolinate + succinyl-CoA + H2O = (S)-2-succinylamino-6-oxoheptanedioate + CoA. It functions in the pathway amino-acid biosynthesis; L-lysine biosynthesis via DAP pathway; LL-2,6-diaminopimelate from (S)-tetrahydrodipicolinate (succinylase route): step 1/3. The protein is 2,3,4,5-tetrahydropyridine-2,6-dicarboxylate N-succinyltransferase of Neisseria meningitidis serogroup A / serotype 4A (strain DSM 15465 / Z2491).